We begin with the raw amino-acid sequence, 211 residues long: Peptide methionine sulfoxide reductase MsrA (211 aa).

Cys-52 is a catalytic residue.

This sequence belongs to the MsrA Met sulfoxide reductase family.

It carries out the reaction L-methionyl-[protein] + [thioredoxin]-disulfide + H2O = L-methionyl-(S)-S-oxide-[protein] + [thioredoxin]-dithiol. The enzyme catalyses [thioredoxin]-disulfide + L-methionine + H2O = L-methionine (S)-S-oxide + [thioredoxin]-dithiol. Its function is as follows. Has an important function as a repair enzyme for proteins that have been inactivated by oxidation. Catalyzes the reversible oxidation-reduction of methionine sulfoxide in proteins to methionine. This Photobacterium profundum (strain SS9) protein is Peptide methionine sulfoxide reductase MsrA.